The following is a 704-amino-acid chain: Ribosomal RNA large subunit methyltransferase K/L (704 aa).

The protein belongs to the methyltransferase superfamily. RlmKL family.

It is found in the cytoplasm. The catalysed reaction is guanosine(2445) in 23S rRNA + S-adenosyl-L-methionine = N(2)-methylguanosine(2445) in 23S rRNA + S-adenosyl-L-homocysteine + H(+). The enzyme catalyses guanosine(2069) in 23S rRNA + S-adenosyl-L-methionine = N(2)-methylguanosine(2069) in 23S rRNA + S-adenosyl-L-homocysteine + H(+). Its function is as follows. Specifically methylates the guanine in position 2445 (m2G2445) and the guanine in position 2069 (m7G2069) of 23S rRNA. The protein is Ribosomal RNA large subunit methyltransferase K/L of Alcanivorax borkumensis (strain ATCC 700651 / DSM 11573 / NCIMB 13689 / SK2).